The sequence spans 712 residues: Sesterterpene synthase btcA (712 aa).

The interval 1-332 (MTTIWEHCVD…CANCPRHHAW (332 aa)) is terpene cyclase. Position 96 (Asp-96) interacts with Mg(2+). Substrate is bound by residues Asp-96, Asn-234, 238–242 (SWDRE), and 328–329 (RH). The short motif at 96–100 (DDLCD) is the DDXXD 1 element. The NSE/DTE signature appears at 234–242 (NDYWSWDRE). Residues 333–706 (RDEESSPSER…VMRIVLSRLS (374 aa)) form a prenyltransferase region. The interval 334 to 373 (DEESSPSERSFSPSNEGIEDPRLSPGASTTSSMSQKSSPA) is disordered. Composition is skewed to low complexity over residues 340–349 (SERSFSPSNE) and 361–373 (STTS…SSPA). Isopentenyl diphosphate is bound by residues Lys-414, Arg-417, and His-446. Mg(2+) is bound by residues Asp-453 and Asp-457. The DDXXD 2 signature appears at 453–457 (DDIED). Position 462 (Arg-462) interacts with dimethylallyl diphosphate. Arg-463 is a binding site for isopentenyl diphosphate. Residues Lys-540, Thr-541, Gln-580, Asn-587, Lys-597, and Lys-607 each coordinate dimethylallyl diphosphate.

This sequence in the N-terminal section; belongs to the terpene synthase family. In the C-terminal section; belongs to the FPP/GGPP synthase family. In terms of assembly, hexamer. It depends on Mg(2+) as a cofactor.

The catalysed reaction is isopentenyl diphosphate + (2E,6E)-farnesyl diphosphate = (2E,6E,10E)-geranylgeranyl diphosphate + diphosphate. It catalyses the reaction isopentenyl diphosphate + (2E,6E,10E)-geranylgeranyl diphosphate = (2E,6E,10E,14E)-geranylfarnesyl diphosphate + diphosphate. The protein operates within secondary metabolite biosynthesis; terpenoid biosynthesis. In terms of biological role, bifunctional terpene synthase; part of the gene cluster that mediates the biosynthesis of betaestacins. The bifunctional terpene synthase btcA converts isopentenyl diphosphate (IPP) and dimethylallyl diphosphate (DMAPP) into the sesterterpene betaestacin I. The C-terminal prenyltransferase (PT) domain of btcA catalyzes formation of GFPP, whereas the N-terminal terpene cyclase (TC) domain catalyzes the cyclization of GFPP into betaestacin I. The cytochrome P450 monooxygenase btcB oxidizes the C25 methyl group of betaestacin I to yield the carboxylic acid betaestacin IV via the alcohol betaestacin III. The cytochrome P450 monooxygenase btcC further catalyzes the multistep oxidation of betaestacin IV to produce several compounds, including betaestacins Va, Vb, Vc and VI. The chain is Sesterterpene synthase btcA from Colletotrichum orbiculare (strain 104-T / ATCC 96160 / CBS 514.97 / LARS 414 / MAFF 240422) (Cucumber anthracnose fungus).